The sequence spans 278 residues: N-terminal Xaa-Pro-Lys N-methyltransferase 2 (278 aa).

S-adenosyl-L-methionine-binding positions include G123, R128, D145, 174-175, Q190, and H195; that span reads LQ.

This sequence belongs to the methyltransferase superfamily. NTM1 family.

The protein resides in the nucleus. It catalyses the reaction N-terminal L-alanyl-L-prolyl-L-lysyl-[protein] + S-adenosyl-L-methionine = N-terminal N-methyl-L-alanyl-L-prolyl-L-lysyl-[protein] + S-adenosyl-L-homocysteine + H(+). The catalysed reaction is N-terminal L-prolyl-L-prolyl-L-lysyl-[protein] + S-adenosyl-L-methionine = N-terminal N-methyl-L-prolyl-L-prolyl-L-lysyl-[protein] + S-adenosyl-L-homocysteine + H(+). It carries out the reaction N-terminal L-seryl-L-prolyl-L-lysyl-[protein] + S-adenosyl-L-methionine = N-terminal N-methyl-L-seryl-L-prolyl-L-lysyl-[protein] + S-adenosyl-L-homocysteine + H(+). Alpha N-methyltransferase that methylates the N-terminus of target proteins containing the N-terminal motif [Ala/Pro/Ser]-Pro-Lys when the initiator Met is cleaved. Specifically catalyzes monomethylation of exposed alpha-amino group of Ala or Ser residue in the [Ala/Ser]-Pro-Lys motif and Pro in the Pro-Pro-Lys motif. Predominantly functions as a mono-methyltransferase but is also able to di-/tri-methylate the GPKRIA peptide and di-methylate the PPKRIA peptide (in vitro). May activate NTMT1 by priming its substrates for trimethylation. The chain is N-terminal Xaa-Pro-Lys N-methyltransferase 2 (ntmt2) from Danio rerio (Zebrafish).